Consider the following 376-residue polypeptide: Chaperone protein DnaJ (376 aa).

A J domain is found at 5–70 (DYYEVLGVGR…DKKAAYDQFG (66 aa)). A CR-type zinc finger spans residues 132 to 210 (GLTKELRIPT…CHGDGRVEKS (79 aa)). Cysteine 145, cysteine 148, cysteine 162, cysteine 165, cysteine 184, cysteine 187, cysteine 198, and cysteine 201 together coordinate Zn(2+). CXXCXGXG motif repeat units follow at residues 145-152 (CDLCDGSG), 162-169 (CTTCHGQG), 184-191 (CPTCHGRG), and 198-205 (CTKCHGDG).

The protein belongs to the DnaJ family. Homodimer. Zn(2+) serves as cofactor.

Its subcellular location is the cytoplasm. Functionally, participates actively in the response to hyperosmotic and heat shock by preventing the aggregation of stress-denatured proteins and by disaggregating proteins, also in an autonomous, DnaK-independent fashion. Unfolded proteins bind initially to DnaJ; upon interaction with the DnaJ-bound protein, DnaK hydrolyzes its bound ATP, resulting in the formation of a stable complex. GrpE releases ADP from DnaK; ATP binding to DnaK triggers the release of the substrate protein, thus completing the reaction cycle. Several rounds of ATP-dependent interactions between DnaJ, DnaK and GrpE are required for fully efficient folding. Also involved, together with DnaK and GrpE, in the DNA replication of plasmids through activation of initiation proteins. The polypeptide is Chaperone protein DnaJ (Shewanella putrefaciens (strain CN-32 / ATCC BAA-453)).